Reading from the N-terminus, the 182-residue chain is Glycerol-3-phosphate acyltransferase 1 (182 aa).

Transmembrane regions (helical) follow at residues 5–25 (MQFL…AYIV), 54–74 (GYFV…VSIA), 81–101 (STFL…PILF), 117–137 (IAFD…FYLI), and 157–177 (ILYS…VLIL).

Belongs to the PlsY family. In terms of assembly, probably interacts with PlsX.

The protein localises to the cell membrane. The catalysed reaction is an acyl phosphate + sn-glycerol 3-phosphate = a 1-acyl-sn-glycero-3-phosphate + phosphate. It functions in the pathway lipid metabolism; phospholipid metabolism. In terms of biological role, catalyzes the transfer of an acyl group from acyl-phosphate (acyl-PO(4)) to glycerol-3-phosphate (G3P) to form lysophosphatidic acid (LPA). This enzyme utilizes acyl-phosphate as fatty acyl donor, but not acyl-CoA or acyl-ACP. This is Glycerol-3-phosphate acyltransferase 1 from Bacillus thuringiensis subsp. konkukian (strain 97-27).